The following is a 157-amino-acid chain: uncharacterized protein (157 aa).

In terms of domain architecture, N-acetyltransferase spans 9–154 (LLINYKTLDE…ETNLNAVTNE (146 aa)).

This is an uncharacterized protein from Bacillus cereus (strain G9842).